The following is a 347-amino-acid chain: HTH-type transcriptional regulator PhcA (347 aa).

The HTH lysR-type domain occupies 1-61 (MVNVDTKLLV…IRVPHGLTPT (61 aa)). Residues 21 to 40 (ATYVAEKMHMTAPAVSHSLG) constitute a DNA-binding region (H-T-H motif). Residues 316-347 (PMHPPMLTDDSGKSGKTGKGDAEKEDESRLSV) are disordered. Over residues 325–347 (DSGKSGKTGKGDAEKEDESRLSV) the composition is skewed to basic and acidic residues.

It belongs to the LysR transcriptional regulatory family.

Its function is as follows. Regulates the transcription of one or more of the genes involved in virulence. This Ralstonia nicotianae (strain ATCC BAA-1114 / GMI1000) (Ralstonia solanacearum) protein is HTH-type transcriptional regulator PhcA (phcA).